We begin with the raw amino-acid sequence, 116 residues long: Large ribosomal subunit protein bL17 (116 aa).

This sequence belongs to the bacterial ribosomal protein bL17 family. Part of the 50S ribosomal subunit. Contacts protein L32.

The chain is Large ribosomal subunit protein bL17 from Wolinella succinogenes (strain ATCC 29543 / DSM 1740 / CCUG 13145 / JCM 31913 / LMG 7466 / NCTC 11488 / FDC 602W) (Vibrio succinogenes).